The chain runs to 376 residues: MSKRDYYEVLGVGRDASEREIKKAYKRLAMKFHPDRNPGDKAAEASFKEAKEAYEILTDTDKKAAYDQFGHAGVDPNRGGGYGGGQGDFGDIFGDVFGDIFGGGRRGGQRQAARGSDLRYNLELSLEEAVKGLTKELRIPTLATCDLCDGSGAKKGTSASTCTTCHGQGQVQMRQGFFTVQQPCPTCHGRGKIIKDPCTKCHGDGRVEKSKTLSVKIPAGVDTGDRIRLAGEGEAGEFGAPPGDLYVQVSVREHAIFVRDGNNLYCEVPISFSKAALGGEIEVPTLDGKVSLKIPAETQTGRMFRLRGKGVKSVRSHAVGDLLCKVVMETPVNLNDRQKELLREFEATLTGESKKHSPKAEGFFDGVKKFFQDLNS.

A J domain is found at 5-70 (DYYEVLGVGR…DKKAAYDQFG (66 aa)). Residues 132–210 (GLTKELRIPT…CHGDGRVEKS (79 aa)) form a CR-type zinc finger. Residues cysteine 145, cysteine 148, cysteine 162, cysteine 165, cysteine 184, cysteine 187, cysteine 198, and cysteine 201 each contribute to the Zn(2+) site. CXXCXGXG motif repeat units follow at residues 145 to 152 (CDLCDGSG), 162 to 169 (CTTCHGQG), 184 to 191 (CPTCHGRG), and 198 to 205 (CTKCHGDG).

The protein belongs to the DnaJ family. Homodimer. It depends on Zn(2+) as a cofactor.

The protein resides in the cytoplasm. In terms of biological role, participates actively in the response to hyperosmotic and heat shock by preventing the aggregation of stress-denatured proteins and by disaggregating proteins, also in an autonomous, DnaK-independent fashion. Unfolded proteins bind initially to DnaJ; upon interaction with the DnaJ-bound protein, DnaK hydrolyzes its bound ATP, resulting in the formation of a stable complex. GrpE releases ADP from DnaK; ATP binding to DnaK triggers the release of the substrate protein, thus completing the reaction cycle. Several rounds of ATP-dependent interactions between DnaJ, DnaK and GrpE are required for fully efficient folding. Also involved, together with DnaK and GrpE, in the DNA replication of plasmids through activation of initiation proteins. The protein is Chaperone protein DnaJ of Shewanella putrefaciens (strain CN-32 / ATCC BAA-453).